Consider the following 417-residue polypeptide: Oxidoreductase phnG (417 aa).

Residues 16-20 (GGSYA), arginine 61, and aspartate 317 each bind 6-hydroxy-FAD.

The protein belongs to the FAD-dependent oxidoreductase family. Requires 6-hydroxy-FAD as cofactor.

The catalysed reaction is deoxyherqueinone + NADPH + O2 + H(+) = herqueinone + NADP(+) + H2O. Its pathway is secondary metabolite biosynthesis. In terms of biological role, oxidoreductase; part of the gene cluster that mediates the biosynthesis of phenalenones such as herqueinone, compounds that have been reported to treat tumors, bacterial infections and/or mycoses, and rheumatic diseases. The non-reducing polyketide synthase phnA synthesizes the heptaketide backbone and cyclizes it into the angular, hemiketal-containing naphtho-gamma-pyrone prephenalenone. The product template (PT) domain of phnA catalyzes only the C4-C9 aldol condensation, which is unprecedented among known PT domains. The transformation of prephenalenone to phenalenones requires an FAD-dependent monooxygenase phnB, which catalyzes the C2 aromatic hydroxylation of prephenalenone and ring opening of the gamma-pyrone ring simultaneously. Subsequent intramolecular deprotonation of C3 phenolic oxygen accelerates phenalenone ring closure to yield the tricyclic phenalenone core with a C2 hydroxylation. The prenyltransferase phnF further catalyzes reverse C-prenylation of phenalenone by direct electrophilic substitution at C6, or possibly via first a forward O-prenylation of a neighboring phenol in phenalenone, followed by a Claisen rearrangement. The hydroalkoxylation enzyme phnH catalyzes the 5-exo-trig cyclization via acid catalysis after the spontaneous deprotonation of 7-OH, which leads to the formation of the dihydrobenzofuran atrovenetin. Atrovenetin is further converted to deoxyherqueinone by the O-methyltransferase phnC which can methylate C2-OH to stabilize the northern portion of the phenalenone core. Finally, the oxidoreductase phnG converts deoxyherqueinone to herqueinone via C6 hydroxylation. In Penicillium herquei, this protein is Oxidoreductase phnG.